The sequence spans 407 residues: Lysosomal phospholipase A and acyltransferase (407 aa).

Positions 1–29 are cleaved as a signal peptide; that stretch reads MGCLCLYRSTLLTGGLLFLLMLADPAFPA. Position 41 (Asp41) interacts with substrate. Residues Cys60 and Cys84 are joined by a disulfide bond. N-linked (GlcNAc...) asparagine glycosylation occurs at Asn94. The active-site Acyl-ester intermediate is the Ser193. Residue Ser193 participates in Zn(2+) binding. Position 194 (Met194) interacts with substrate. A glycan (N-linked (GlcNAc...) asparagine) is linked at Asn284. Catalysis depends on charge relay system residues Asp355 and His387. Position 387 (His387) interacts with Zn(2+). An N-linked (GlcNAc...) asparagine glycan is attached at Asn393.

This sequence belongs to the AB hydrolase superfamily. Lipase family. In terms of processing, N-glycosylated. Post-translationally, N-glycosylated. N-glycosylation is important for maturation of the enzyme and normal subcellular location. As to expression, detected in brain (at protein level).

Its subcellular location is the lysosome. The protein resides in the secreted. The protein localises to the membrane. It carries out the reaction a 1,2-diacyl-sn-glycero-3-phosphocholine + H2O = a 2-acyl-sn-glycero-3-phosphocholine + a fatty acid + H(+). The catalysed reaction is 1-hexadecanoyl-2-(9Z-octadecenoyl)-sn-glycero-3-phosphocholine + H2O = 2-(9Z-octadecenoyl)-sn-glycero-3-phosphocholine + hexadecanoate + H(+). The enzyme catalyses 1,2-di-(9Z-octadecenoyl)-sn-glycero-3-phosphocholine + H2O = 2-(9Z-octadecenoyl)-sn-glycero-3-phosphocholine + (9Z)-octadecenoate + H(+). It catalyses the reaction 1-hexadecanoyl-2-glutaroyl-sn-glycero-3-phosphocholine + H2O = 2-glutaroyl-sn-glycero-3-phosphocholine + hexadecanoate + H(+). It carries out the reaction 1-hexadecanoyl-2-nonadioyl-sn-glycero-3-phosphocholine + H2O = 2-nonadioyl-sn-glycero-3-phosphocholine + hexadecanoate + H(+). The catalysed reaction is 1-hexadecanoyl-2-(5-oxopentanoyl)-sn-glycero-3-phosphocholine + H2O = 2-(5-oxopentanoyl)-sn-glycero-3-phosphocholine + hexadecanoate + H(+). The enzyme catalyses 1-hexadecanoyl-2-(9-oxononanoyl)-sn-glycero-3-phosphocholine + H2O = 2-(9-oxononanoyl)-sn-glycero-3-phosphocholine + hexadecanoate + H(+). It catalyses the reaction 1,2-dihexadecanoyl-sn-glycero-3-phosphocholine + H2O = 2-hexadecanoyl-sn-glycero-3-phosphocholine + hexadecanoate + H(+). It carries out the reaction a 1,2-diacyl-sn-glycero-3-phosphocholine + H2O = a 1-acyl-sn-glycero-3-phosphocholine + a fatty acid + H(+). The catalysed reaction is 1-hexadecanoyl-2-(9Z-octadecenoyl)-sn-glycero-3-phosphocholine + H2O = 1-hexadecanoyl-sn-glycero-3-phosphocholine + (9Z)-octadecenoate + H(+). The enzyme catalyses 1,2-di-(9Z-octadecenoyl)-sn-glycero-3-phosphocholine + H2O = 1-(9Z-octadecenoyl)-sn-glycero-3-phosphocholine + (9Z)-octadecenoate + H(+). It catalyses the reaction 1,2-dihexadecanoyl-sn-glycero-3-phosphocholine + H2O = 1-hexadecanoyl-sn-glycero-3-phosphocholine + hexadecanoate + H(+). It carries out the reaction a 1-acyl-sn-glycero-3-phosphocholine + H2O = sn-glycerol 3-phosphocholine + a fatty acid + H(+). The catalysed reaction is 1-hexadecanoyl-sn-glycero-3-phosphocholine + H2O = sn-glycerol 3-phosphocholine + hexadecanoate + H(+). The enzyme catalyses N-(acetyl)-sphing-4-enine + a 1,2-diacyl-sn-glycero-3-phosphoethanolamine = 1-O-acyl-N-(acetyl)-sphing-4-enine + a 2-acyl-sn-glycero-3-phosphoethanolamine. It catalyses the reaction 1-hexadecanoyl-2-(9Z-octadecenoyl)-sn-glycero-3-phosphoethanolamine + N-(acetyl)-sphing-4-enine = 2-(9Z-octadecenoyl)-sn-glycero-3-phosphoethanolamine + 1-hexadecanoyl-N-(acetyl)-sphing-4-enine. It carries out the reaction 1-hexadecanoyl-2-(9Z,12Z-octadecadienoyl)-sn-glycero-3-phosphoethanolamine + N-(acetyl)-sphing-4-enine = 2-(9Z,12Z)-octadecadienoyl-sn-glycero-3-phosphoethanolamine + 1-hexadecanoyl-N-(acetyl)-sphing-4-enine. The catalysed reaction is 1-hexadecanoyl-2-(5Z,8Z,11Z,14Z-eicosatetraenoyl)-sn-glycero-3-phosphoethanolamine + N-(acetyl)-sphing-4-enine = 2-(5Z,8Z,11Z,14Z)-eicosatetraenoyl-sn-glycero-3-phosphoethanolamine + 1-hexadecanoyl-N-(acetyl)-sphing-4-enine. The enzyme catalyses N-(acetyl)-sphing-4-enine + a 1,2-diacyl-sn-glycero-3-phosphoethanolamine = 1-O-acyl-N-(acetyl)-sphing-4-enine + a 1-acyl-sn-glycero-3-phosphoethanolamine. It catalyses the reaction 1-hexadecanoyl-2-(9Z-octadecenoyl)-sn-glycero-3-phosphoethanolamine + N-(acetyl)-sphing-4-enine = 1-(9Z-octadecenoyl)-N-(acetyl)-sphing-4-enine + 1-hexadecanoyl-sn-glycero-3-phosphoethanolamine. It carries out the reaction 1-hexadecanoyl-2-(9Z,12Z-octadecadienoyl)-sn-glycero-3-phosphoethanolamine + N-(acetyl)-sphing-4-enine = 1-(9Z,12Z-octadecadienoyl)-N-acetylsphing-4-enine + 1-hexadecanoyl-sn-glycero-3-phosphoethanolamine. The catalysed reaction is 1-hexadecanoyl-2-(5Z,8Z,11Z,14Z-eicosatetraenoyl)-sn-glycero-3-phosphoethanolamine + N-(acetyl)-sphing-4-enine = 1-(5Z,8Z,11Z,14Z)-eicosatetraenoyl-N-(acetyl)-sphing-4-enine + 1-hexadecanoyl-sn-glycero-3-phosphoethanolamine. The enzyme catalyses N-(acetyl)-sphing-4-enine + a 1,2-diacyl-sn-glycero-3-phosphocholine = 1-O-acyl-N-(acetyl)-sphing-4-enine + a 2-acyl-sn-glycero-3-phosphocholine. It catalyses the reaction 1-hexadecanoyl-2-(9Z-octadecenoyl)-sn-glycero-3-phosphocholine + N-(acetyl)-sphing-4-enine = 1-hexadecanoyl-N-(acetyl)-sphing-4-enine + 2-(9Z-octadecenoyl)-sn-glycero-3-phosphocholine. It carries out the reaction 1-hexadecanoyl-2-(9Z,12Z-octadecadienoyl)-sn-glycero-3-phosphocholine + N-(acetyl)-sphing-4-enine = 2-(9Z,12Z-octadecadienoyl)-sn-glycero-3-phosphocholine + 1-hexadecanoyl-N-(acetyl)-sphing-4-enine. The catalysed reaction is 1-hexadecanoyl-2-(5Z,8Z,11Z,14Z-eicosatetraenoyl)-sn-glycero-3-phosphocholine + N-(acetyl)-sphing-4-enine = 1-hexadecanoyl-N-(acetyl)-sphing-4-enine + 2-(5Z,8Z,11Z,14Z)-eicosatetraenoyl-sn-glycero-3-phosphocholine. The enzyme catalyses 1-hexadecanoyl-2-(4Z,7Z,10Z,13Z,16Z,19Z-docosahexaenoyl)-sn-glycero-3-phosphocholine + N-(acetyl)-sphing-4-enine = 2-(4Z,7Z,10Z,13Z,16Z,19Z-docosahexaenoyl)-sn-glycero-3-phosphocholine + 1-hexadecanoyl-N-(acetyl)-sphing-4-enine. It catalyses the reaction 1-hexadecanoyl-2-nonadioyl-sn-glycero-3-phosphocholine + N-(acetyl)-sphing-4-enine = 2-nonadioyl-sn-glycero-3-phosphocholine + 1-hexadecanoyl-N-(acetyl)-sphing-4-enine. It carries out the reaction 1-octadecanoyl-2-(9Z-octadecenoyl)-sn-glycero-3-phosphocholine + N-(acetyl)-sphing-4-enine = 1-octadecanoyl-N-(acetyl)-sphing-4-enine + 2-(9Z-octadecenoyl)-sn-glycero-3-phosphocholine. The catalysed reaction is 1-(9Z)-octadecenoyl-2-octadecanoyl-sn-glycero-3-phosphocholine + N-(acetyl)-sphing-4-enine = 2-octadecanoyl-sn-glycero-3-phosphocholine + 1-(9Z-octadecenoyl)-N-(acetyl)-sphing-4-enine. The enzyme catalyses 1-octadecanoyl-2-(5Z,8Z,11Z,14Z-eicosatetraenoyl)-sn-glycero-3-phosphocholine + N-(acetyl)-sphing-4-enine = 1-octadecanoyl-N-(acetyl)-sphing-4-enine + 2-(5Z,8Z,11Z,14Z)-eicosatetraenoyl-sn-glycero-3-phosphocholine. It catalyses the reaction 1-(9Z-octadecenoyl)-2-hexadecanoyl-sn-glycero-3-phosphocholine + N-(acetyl)-sphing-4-enine = 1-(9Z-octadecenoyl)-N-(acetyl)-sphing-4-enine + 2-hexadecanoyl-sn-glycero-3-phosphocholine. It carries out the reaction N-(acetyl)-sphing-4-enine + a 1,2-diacyl-sn-glycero-3-phosphocholine = 1-O-acyl-N-(acetyl)-sphing-4-enine + a 1-acyl-sn-glycero-3-phosphocholine. The catalysed reaction is 1-hexadecanoyl-2-(9Z-octadecenoyl)-sn-glycero-3-phosphocholine + N-(acetyl)-sphing-4-enine = 1-(9Z-octadecenoyl)-N-(acetyl)-sphing-4-enine + 1-hexadecanoyl-sn-glycero-3-phosphocholine. The enzyme catalyses 1-hexadecanoyl-2-(9Z,12Z-octadecadienoyl)-sn-glycero-3-phosphocholine + N-(acetyl)-sphing-4-enine = 1-(9Z,12Z-octadecadienoyl)-N-acetylsphing-4-enine + 1-hexadecanoyl-sn-glycero-3-phosphocholine. It catalyses the reaction 1-hexadecanoyl-2-(5Z,8Z,11Z,14Z-eicosatetraenoyl)-sn-glycero-3-phosphocholine + N-(acetyl)-sphing-4-enine = 1-(5Z,8Z,11Z,14Z)-eicosatetraenoyl-N-(acetyl)-sphing-4-enine + 1-hexadecanoyl-sn-glycero-3-phosphocholine. It carries out the reaction 1-hexadecanoyl-2-(4Z,7Z,10Z,13Z,16Z,19Z-docosahexaenoyl)-sn-glycero-3-phosphocholine + N-(acetyl)-sphing-4-enine = 1-(4Z,7Z,10Z,13Z,16Z,19Z-docosahexaenoyl)-N-(acetyl)-sphing-4-enine + 1-hexadecanoyl-sn-glycero-3-phosphocholine. The catalysed reaction is 1-octadecanoyl-2-(9Z-octadecenoyl)-sn-glycero-3-phosphocholine + N-(acetyl)-sphing-4-enine = 1-(9Z-octadecenoyl)-N-(acetyl)-sphing-4-enine + 1-octadecanoyl-sn-glycero-3-phosphocholine. The enzyme catalyses 1-octadecanoyl-2-(9Z,12Z)-octadecadienoyl-sn-glycero-3-phosphocholine + N-(acetyl)-sphing-4-enine = 1-(9Z,12Z-octadecadienoyl)-N-acetylsphing-4-enine + 1-octadecanoyl-sn-glycero-3-phosphocholine. It catalyses the reaction 1-(9Z-octadecenoyl)-2-hexadecanoyl-sn-glycero-3-phosphocholine + N-(acetyl)-sphing-4-enine = 1-hexadecanoyl-N-(acetyl)-sphing-4-enine + 1-(9Z-octadecenoyl)-sn-glycero-3-phosphocholine. It carries out the reaction 1-(9Z)-octadecenoyl-2-octadecanoyl-sn-glycero-3-phosphocholine + N-(acetyl)-sphing-4-enine = 1-octadecanoyl-N-(acetyl)-sphing-4-enine + 1-(9Z-octadecenoyl)-sn-glycero-3-phosphocholine. The catalysed reaction is 1,2-di-(9Z-octadecenoyl)-sn-glycero-3-phosphocholine + N-(acetyl)-sphing-4-enine = 1-(9Z-octadecenoyl)-N-(acetyl)-sphing-4-enine + 1-(9Z-octadecenoyl)-sn-glycero-3-phosphocholine. The enzyme catalyses 1-octadecanoyl-2-(5Z,8Z,11Z,14Z-eicosatetraenoyl)-sn-glycero-3-phosphocholine + N-(acetyl)-sphing-4-enine = 1-(5Z,8Z,11Z,14Z)-eicosatetraenoyl-N-(acetyl)-sphing-4-enine + 1-octadecanoyl-sn-glycero-3-phosphocholine. It catalyses the reaction a 1,2-diacyl-sn-glycero-3-phospho-L-serine + N-(acetyl)-sphing-4-enine = a 2-acyl-sn-glycero-3-phospho-L-serine + 1-O-acyl-N-(acetyl)-sphing-4-enine. It carries out the reaction 1-octadecanoyl-2-(9Z-octadecenoyl)-sn-glycero-3-phospho-L-serine + N-(acetyl)-sphing-4-enine = 2-(9Z-octadecenoyl)-sn-glycero-3-phospho-L-serine + 1-octadecanoyl-N-(acetyl)-sphing-4-enine. The catalysed reaction is a 1,2-diacyl-sn-glycero-3-phospho-L-serine + N-(acetyl)-sphing-4-enine = 1-O-acyl-N-(acetyl)-sphing-4-enine + a 1-acyl-sn-glycero-3-phospho-L-serine. The enzyme catalyses 1-octadecanoyl-2-(9Z-octadecenoyl)-sn-glycero-3-phospho-L-serine + N-(acetyl)-sphing-4-enine = 1-octadecanoyl-sn-glycero-3-phosphoserine + 1-(9Z-octadecenoyl)-N-(acetyl)-sphing-4-enine. It catalyses the reaction a 1,2-diacyl-sn-glycero-3-phospho-(1'-sn-glycerol) + N-(acetyl)-sphing-4-enine = 2-acyl-sn-glycero-3-phospho-(1'-sn-glycerol) + 1-O-acyl-N-(acetyl)-sphing-4-enine. It carries out the reaction 1-octadecanoyl-2-(9Z-octadecenoyl)-sn-glycero-3-phospho-(1'-sn-glycerol) + N-(acetyl)-sphing-4-enine = 2-(9Z-octadecenoyl)-sn-glycero-3-phospho-(1'-sn-glycerol) + 1-octadecanoyl-N-(acetyl)-sphing-4-enine. The catalysed reaction is a 1,2-diacyl-sn-glycero-3-phospho-(1'-sn-glycerol) + N-(acetyl)-sphing-4-enine = 1-O-acyl-N-(acetyl)-sphing-4-enine + 1-acyl-sn-glycero-3-phospho-(1'-sn-glycerol). The enzyme catalyses 1-octadecanoyl-2-(9Z-octadecenoyl)-sn-glycero-3-phospho-(1'-sn-glycerol) + N-(acetyl)-sphing-4-enine = 1-octadecanoyl-sn-glycero-3-phospho-(1'-sn-glycerol) + 1-(9Z-octadecenoyl)-N-(acetyl)-sphing-4-enine. It catalyses the reaction an N-acylethanolamine + a 1,2-diacyl-sn-glycero-3-phosphocholine = 2-(acylamino)ethyl fatty acid + a 2-acyl-sn-glycero-3-phosphocholine. It carries out the reaction an N-acylethanolamine + a 1,2-diacyl-sn-glycero-3-phosphocholine = 2-(acylamino)ethyl fatty acid + a 1-acyl-sn-glycero-3-phosphocholine. The catalysed reaction is N-(5Z,8Z,11Z,14Z-eicosatetraenoyl)-ethanolamine + 1,2-di-(9Z-octadecenoyl)-sn-glycero-3-phosphocholine = 2-[(5Z,8Z,11Z,14Z)-eicosatetraenoylamino]ethyl (9Z)-octadecenoate + (9Z-octadecenoyl)-sn-glycero-3-phosphocholine. The enzyme catalyses N-(9Z-octadecenoyl) ethanolamine + 1,2-di-(9Z-octadecenoyl)-sn-glycero-3-phosphocholine = 2-[(9Z)-octadecenoylamino]ethyl (9Z)-octadecenoate + (9Z-octadecenoyl)-sn-glycero-3-phosphocholine. It catalyses the reaction a 3-acyl-sn-glycerol + a 1,2-diacyl-sn-glycero-3-phosphocholine = a 1,3-diacylglycerol + a 1-acyl-sn-glycero-3-phosphocholine. It carries out the reaction a 3-acyl-sn-glycerol + a 1,2-diacyl-sn-glycero-3-phosphocholine = a 1,3-diacylglycerol + a 2-acyl-sn-glycero-3-phosphocholine. The catalysed reaction is 3-(9Z-octadecenoyl)-sn-glycerol + 1,2-di-(9Z-octadecenoyl)-sn-glycero-3-phosphocholine = 1,3-di-(9Z-octadecenoyl)-glycerol + (9Z-octadecenoyl)-sn-glycero-3-phosphocholine. The enzyme catalyses 3-hexadecanoyl-sn-glycerol + 1,2-di-(9Z-octadecenoyl)-sn-glycero-3-phosphocholine = 1-(9Z)-octadecenoyl-3-hexadecanoyl-sn-glycerol + (9Z-octadecenoyl)-sn-glycero-3-phosphocholine. It catalyses the reaction a 1-acyl-sn-glycerol + a 1,2-diacyl-sn-glycero-3-phosphocholine = a 1,3-diacylglycerol + a 2-acyl-sn-glycero-3-phosphocholine. It carries out the reaction a 1-acyl-sn-glycerol + a 1,2-diacyl-sn-glycero-3-phosphocholine = a 1,3-diacylglycerol + a 1-acyl-sn-glycero-3-phosphocholine. The catalysed reaction is 1-(9Z-octadecenoyl)-sn-glycerol + 1,2-di-(9Z-octadecenoyl)-sn-glycero-3-phosphocholine = 1,3-di-(9Z-octadecenoyl)-glycerol + (9Z-octadecenoyl)-sn-glycero-3-phosphocholine. The enzyme catalyses 1-hexadecanoyl-sn-glycerol + 1,2-di-(9Z-octadecenoyl)-sn-glycero-3-phosphocholine = 1-hexadecanoyl-3-(9Z)-octadecenoyl-sn-glycerol + (9Z-octadecenoyl)-sn-glycero-3-phosphocholine. It catalyses the reaction a 2-acylglycerol + a 1,2-diacyl-sn-glycero-3-phosphocholine = a 1,2-diacylglycerol + a 2-acyl-sn-glycero-3-phosphocholine. It carries out the reaction a 2-acylglycerol + a 1,2-diacyl-sn-glycero-3-phosphocholine = a 1,2-diacylglycerol + a 1-acyl-sn-glycero-3-phosphocholine. The catalysed reaction is 2-hexadecanoylglycerol + 1,2-di-(9Z-octadecenoyl)-sn-glycero-3-phosphocholine = 1-(9Z)-octadecenoyl-2-hexadecanoylglycerol + (9Z-octadecenoyl)-sn-glycero-3-phosphocholine. The enzyme catalyses 1-O-alkylglycerol + a 1,2-diacyl-sn-glycero-3-phosphocholine = 1-O-alkyl-3-acylglycerol + a 1-acyl-sn-glycero-3-phosphocholine. It catalyses the reaction 1-O-alkylglycerol + a 1,2-diacyl-sn-glycero-3-phosphocholine = 1-O-alkyl-3-acylglycerol + a 2-acyl-sn-glycero-3-phosphocholine. It carries out the reaction 1-O-hexadecylglycerol + 1,2-di-(9Z-octadecenoyl)-sn-glycero-3-phosphocholine = 1-O-hexadecyl-3-(9Z)-octadecenoylglycerol + (9Z-octadecenoyl)-sn-glycero-3-phosphocholine. The catalysed reaction is 1-O-alkyl-2-acyl-sn-glycerol + a 1,2-diacyl-sn-glycero-3-phosphocholine = 1-O-alkyl-2,3-diacyl-sn-glycerol + a 2-acyl-sn-glycero-3-phosphocholine. The enzyme catalyses 1-O-alkyl-2-acyl-sn-glycerol + a 1,2-diacyl-sn-glycero-3-phosphocholine = 1-O-alkyl-2,3-diacyl-sn-glycerol + a 1-acyl-sn-glycero-3-phosphocholine. It catalyses the reaction 1-O-hexadecyl-2-acetyl-sn-glycerol + 1,2-di-(9Z-octadecenoyl)-sn-glycero-3-phosphocholine = 1-O-hexadecyl-2-acetyl-3-(9Z)-octadecenoyl-sn-glycerol + (9Z-octadecenoyl)-sn-glycero-3-phosphocholine. It carries out the reaction 1-O-hexadecyl-2-O-methyl-sn-glycerol + 1,2-di-(9Z-octadecenoyl)-sn-glycero-3-phosphocholine = 1-O-hexadecyl-2-O-methyl-3-(9Z)-octadecenoyl-sn-glycerol + (9Z-octadecenoyl)-sn-glycero-3-phosphocholine. The catalysed reaction is a 1,2-diacyl-sn-glycero-3-phosphoethanolamine + H2O = a 1-acyl-sn-glycero-3-phosphoethanolamine + a fatty acid + H(+). The enzyme catalyses 1-acyl-2-(5Z,8Z,11Z,14Z)-eicosatetraenoyl-sn-glycero-3-phosphoethanolamine + H2O = a 1-acyl-sn-glycero-3-phosphoethanolamine + (5Z,8Z,11Z,14Z)-eicosatetraenoate + H(+). It catalyses the reaction a 1,2-diacyl-sn-glycero-3-phospho-(1'-sn-glycerol) + H2O = 1-acyl-sn-glycero-3-phospho-(1'-sn-glycerol) + a fatty acid + H(+). It carries out the reaction 1-hexadecanoyl-2-(9Z-octadecenoyl)-sn-glycero-3-phospho-(1'-sn-glycerol) + H2O = 1-hexadecanoyl-sn-glycero-3-phospho-(1'-sn-glycerol) + (9Z)-octadecenoate + H(+). The catalysed reaction is a 1,2-diacyl-sn-glycero-3-phospho-(1'-sn-glycerol) + H2O = 2-acyl-sn-glycero-3-phospho-(1'-sn-glycerol) + a fatty acid + H(+). The enzyme catalyses 1-hexadecanoyl-2-(9Z-octadecenoyl)-sn-glycero-3-phospho-(1'-sn-glycerol) + H2O = 2-(9Z-octadecenoyl)-sn-glycero-3-phospho-(1'-sn-glycerol) + hexadecanoate + H(+). Transacylase activity is completely inhibited by Triton X-100 and partially inhibited by heparin. Moderately activated by Mg(2+) and Ca(2+). Has dual calcium-independent phospholipase and O-acyltransferase activities with a potential role in glycerophospholipid homeostasis and remodeling of acyl groups of lipophilic alcohols present in acidic cellular compartments. Catalyzes hydrolysis of the ester bond of the fatty acyl group attached at sn-1 or sn-2 position of phospholipids (phospholipase A1 or A2 activity) and transfer it to the hydroxyl group at the first carbon of lipophilic alcohols (O-acyltransferase activity). Among preferred fatty acyl donors are phosphatidylcholines, phosphatidylethanolamines, phosphatidylglycerols and phosphatidylserines. Favors sn-2 over sn-1 deacylation of unsaturated fatty acyl groups of phosphatidylcholines, phosphatidylethanolamines, and phosphatidylglycerols. Among preferred fatty acyl acceptors are natural lipophilic alcohols including short-chain ceramide N-acetyl-sphingosine (C2 ceramide), alkylacylglycerols, monoacylglycerols, and acylethanolamides such as anandamide and oleoylethanolamide. Selectively hydrolyzes the sn-1 fatty acyl group of truncated oxidized phospholipids and may play a role in detoxification of reactive oxidized phospholipids during oxidative stress. Required for normal phospholipid degradation in alveolar macrophages with potential implications in the clearance of pulmonary surfactant, which is mainly composed of dipalmitoylphosphatidylcholine (1,2-dihexadecanoyl-sn-glycero-3-phosphocholine). Involved in the first step of bis(monoacylglycero)phosphate (BMP) de novo synthesis from phosphatidylglycerol (1,2-diacyl-sn-glycero-3-phospho-(1'-sn-glycerol), PG). BMP is an important player in cargo sorting and degradation, regulation of cellular cholesterol levels and intercellular communication. At neutral pH, hydrolyzes the sn-1 fatty acyl group of the lysophosphatidylcholines. The polypeptide is Lysosomal phospholipase A and acyltransferase (PLA2G15) (Bos taurus (Bovine)).